Here is a 118-residue protein sequence, read N- to C-terminus: Na(+)/H(+) antiporter subunit G1 (118 aa).

3 helical membrane-spanning segments follow: residues Ile-4–Ala-24, Ala-38–Leu-58, and Phe-60–Ile-80.

This sequence belongs to the CPA3 antiporters (TC 2.A.63) subunit G family. In terms of assembly, may form a heterooligomeric complex that consists of seven subunits: mnhA1, mnhB1, mnhC1, mnhD1, mnhE1, mnhF1 and mnhG1.

It localises to the cell membrane. In terms of biological role, mnh complex is a Na(+)/H(+) antiporter involved in Na(+) excretion. The polypeptide is Na(+)/H(+) antiporter subunit G1 (mnhG1) (Staphylococcus aureus (strain Mu3 / ATCC 700698)).